A 189-amino-acid polypeptide reads, in one-letter code: GTPase NRas (189 aa).

GTP-binding positions include 10 to 18 and 29 to 30; these read GAGGVGKSA and VD. Positions 32–40 match the Effector region motif; sequence YDPTIEDSY. 57 to 61 serves as a coordination point for GTP; sequence DTAGQ. At S89 the chain carries Phosphoserine. 116–119 lines the GTP pocket; the sequence is NKCD. The segment at 166–185 is hypervariable region; that stretch reads YRLKKLNSSDDGTQGCMGSP. K170 is covalently cross-linked (Glycyl lysine isopeptide (Lys-Gly) (interchain with G-Cter in ubiquitin)). Residue C181 is the site of S-palmitoyl cysteine attachment. C186 is lipidated: S-farnesyl cysteine. Positions 187–189 are cleaved as a propeptide — removed in mature form; the sequence is VLM.

Belongs to the small GTPase superfamily. Ras family. In terms of assembly, interacts (active GTP-bound form preferentially) with RGS14. Interacts (active GTP-bound form) with RASSF7. Interacts (active GTP-bound form) with both SHOC2 and PP1c (all isoforms) to form a tertiary complex; SHOC2 and PP1c preferably bind M-Ras/MRAS, but they also bind K-Ras/KRAS, N-Ras/NRAS and H-Ras/HRAS. In terms of processing, palmitoylated by the ZDHHC9-GOLGA7 complex. Depalmitoylated by ABHD17A, ABHD17B and ABHD17C. A continuous cycle of de- and re-palmitoylation regulates rapid exchange between plasma membrane and Golgi. Post-translationally, acetylation at Lys-104 prevents interaction with guanine nucleotide exchange factors (GEFs). Ubiquitinated by the BCR(LZTR1) E3 ubiquitin ligase complex at Lys-170 in a non-degradative manner, leading to inhibit Ras signaling by decreasing Ras association with membranes. In terms of processing, phosphorylation at Ser-89 enhances NRAS association with its downstream effectors.

The protein localises to the cell membrane. It is found in the golgi apparatus membrane. It catalyses the reaction GTP + H2O = GDP + phosphate + H(+). Alternates between an inactive form bound to GDP and an active form bound to GTP. Activated by a guanine nucleotide-exchange factor (GEF) and inactivated by a GTPase-activating protein (GAP). In terms of biological role, ras proteins bind GDP/GTP and possess intrinsic GTPase activity. The polypeptide is GTPase NRas (Nras) (Mus musculus (Mouse)).